The chain runs to 136 residues: Large ribosomal subunit protein uL16 (136 aa).

This sequence belongs to the universal ribosomal protein uL16 family. Part of the 50S ribosomal subunit.

In terms of biological role, binds 23S rRNA and is also seen to make contacts with the A and possibly P site tRNAs. The sequence is that of Large ribosomal subunit protein uL16 from Shewanella woodyi (strain ATCC 51908 / MS32).